Consider the following 728-residue polypeptide: Catalase-peroxidase 2 (728 aa).

The tryptophyl-tyrosyl-methioninium (Trp-Tyr) (with M-240) cross-link spans 91–214; that stretch reads WHAAGTYRTG…LAAVQMGLIY (124 aa). The active-site Proton acceptor is His-92. A cross-link (tryptophyl-tyrosyl-methioninium (Tyr-Met) (with W-91)) is located at residues 214 to 240; the sequence is YVNPEGPNGNPDPAKAAVDIRETFARM. A heme b-binding site is contributed by His-255. The disordered stretch occupies residues 338 to 362; that stretch reads WKPNGDAGANSIPDPYDPSRRRGPT.

Belongs to the peroxidase family. Peroxidase/catalase subfamily. As to quaternary structure, homodimer or homotetramer. The cofactor is heme b. Post-translationally, formation of the three residue Trp-Tyr-Met cross-link is important for the catalase, but not the peroxidase activity of the enzyme.

It carries out the reaction H2O2 + AH2 = A + 2 H2O. The enzyme catalyses 2 H2O2 = O2 + 2 H2O. Its function is as follows. Bifunctional enzyme with both catalase and broad-spectrum peroxidase activity. This is Catalase-peroxidase 2 from Cupriavidus pinatubonensis (strain JMP 134 / LMG 1197) (Cupriavidus necator (strain JMP 134)).